Here is a 457-residue protein sequence, read N- to C-terminus: UDP-N-acetylmuramate--L-alanine ligase (457 aa).

ATP is bound at residue 109 to 115 (GTDGKTT).

This sequence belongs to the MurCDEF family.

Its subcellular location is the cytoplasm. It catalyses the reaction UDP-N-acetyl-alpha-D-muramate + L-alanine + ATP = UDP-N-acetyl-alpha-D-muramoyl-L-alanine + ADP + phosphate + H(+). The protein operates within cell wall biogenesis; peptidoglycan biosynthesis. In terms of biological role, cell wall formation. The chain is UDP-N-acetylmuramate--L-alanine ligase from Thermotoga petrophila (strain ATCC BAA-488 / DSM 13995 / JCM 10881 / RKU-1).